A 358-amino-acid chain; its full sequence is Phospho-N-acetylmuramoyl-pentapeptide-transferase (358 aa).

Helical transmembrane passes span 13-35, 81-101, 106-126, 142-162, 171-191, 201-221, 228-248, 268-290, and 336-356; these read LLILNTFALIATSYLFNNFIFIG, MGGVFMVIPFLIFLLIININL, LFLLLLTIFGFFITGFVDDFL, FFLQSIIAIIFIFLAYEKDLI, SWQINMNIFTLPISFLVLVGI, LDGLAAGCSGIVFYGLGTEIL, LIIFSILCYSMSGICLGFLKY, ILGSIALLTNSVFTLSIFSGIFI, and IVENFWKINILLVILGIVLKI.

The protein belongs to the glycosyltransferase 4 family. MraY subfamily. It depends on Mg(2+) as a cofactor.

It localises to the cell inner membrane. The catalysed reaction is UDP-N-acetyl-alpha-D-muramoyl-L-alanyl-gamma-D-glutamyl-meso-2,6-diaminopimeloyl-D-alanyl-D-alanine + di-trans,octa-cis-undecaprenyl phosphate = di-trans,octa-cis-undecaprenyl diphospho-N-acetyl-alpha-D-muramoyl-L-alanyl-D-glutamyl-meso-2,6-diaminopimeloyl-D-alanyl-D-alanine + UMP. It participates in cell wall biogenesis; peptidoglycan biosynthesis. Its function is as follows. Catalyzes the initial step of the lipid cycle reactions in the biosynthesis of the cell wall peptidoglycan: transfers peptidoglycan precursor phospho-MurNAc-pentapeptide from UDP-MurNAc-pentapeptide onto the lipid carrier undecaprenyl phosphate, yielding undecaprenyl-pyrophosphoryl-MurNAc-pentapeptide, known as lipid I. The sequence is that of Phospho-N-acetylmuramoyl-pentapeptide-transferase from Prochlorococcus marinus (strain MIT 9312).